Consider the following 80-residue polypeptide: Dermaseptin-A5 (80 aa).

Positions 1–22 are cleaved as a signal peptide; the sequence is MAFLKKSLFLVLFLGLVSLSIC. The propeptide occupies 23–43; that stretch reads EEEKRENEDEEEQEDDEQSEM. Positions 24–45 are disordered; sequence EEKRENEDEEEQEDDEQSEMKR. A compositionally biased stretch (acidic residues) spans 30 to 40; sequence EDEEEQEDDEQ. Valine 77 carries the post-translational modification Valine amide. The propeptide occupies 79-80; the sequence is EQ.

The protein belongs to the frog skin active peptide (FSAP) family. Dermaseptin subfamily. Expressed by the skin glands.

It localises to the secreted. Possesses a potent antimicrobial activity against Gram-positive and Gram-negative bacteria. Probably acts by disturbing membrane functions with its amphipathic structure. This is Dermaseptin-A5 from Agalychnis annae (Blue-sided leaf frog).